We begin with the raw amino-acid sequence, 575 residues long: MHRFASGLASKARLARKGANQIASRSSWSRNYAAKDVKFGVEARGLMLKGVEDLADAVKVTMGPKGRNVVIEQSYGAPKVTKDGVTVAKSIEFKDKVKNVGASLVKQVANATNDVAGDGTTCATILTRAIFTEGCKSVAAGMNAMDLRRGISMAVDSVVTNLKSRARMISTSEEIAQVGTISANGEREIGELIAKAMEKVGKEGVITISDGKTLFNELEVVEGMKLDRGYISPYFITNQKNQKCELDDPLILIHEKKISSINSVVKVLELALKRQRPLLIVSEDVESDALATLILNKLRAGIKVCAIKAPGFGENRKAGLHDLAVLTGGQLITEELGMNLEKVDLDMLGSCKKITISKDDTVILDGAGDKKSIEERCEQIRSAIELSTSDYDKEKLQERLAKLSGGVAVLKIGGASEAEVGEKKDRVTDALNATKAAVEEGIVPGGGVALLYASKELDKLSTANFDQKIGVQIIQNALKTPVHTIASNAGVEGAVVVGKLLEQDNPDLGYDAAKGEYVDMIKAGIIDPLKVIRTALVDAASVSSLMTTTEAIVVELPKDEKEVPAMGGGMGGMDY.

The transit peptide at 1–32 (MHRFASGLASKARLARKGANQIASRSSWSRNY) directs the protein to the mitochondrion.

This sequence belongs to the chaperonin (HSP60) family.

It is found in the mitochondrion. Functionally, implicated in mitochondrial protein import and macromolecular assembly. May facilitate the correct folding of imported proteins. May also prevent misfolding and promote the refolding and proper assembly of unfolded polypeptides generated under stress conditions in the mitochondrial matrix. This is Chaperonin CPN60-2, mitochondrial (CPN60-2) from Cucurbita maxima (Pumpkin).